A 477-amino-acid chain; its full sequence is MQVLHVCSEMFPLLKTGGLADVIGALPAAQIADGVDARVLLPAFPDIRRGVTDAQVVSRRDTFAGHITLLFGHYNGVGIYLIDAPHLYDRPGSPYHDTNLFAYTDNVLRFALLGWVGAEMASGLDPFWRPDVVHAHDWHAGLAPAYLAARGRPAKSVFTVHNLAYQGMFYAHHMNDIQLPWSFFNIHGLEFNGQISFLKAGLYYADHITAVSPTYAREITEPQFAYGMEGLLQQRHREGRLSGVLNGVDEKIWSPETDLLLASRYTRDTLEDKAENKRQLQIAMGLKVDDKVPLFAVVSRLTSQKGLDLVLEALPGLLEQGGQLALLGAGDPVLQEGFLAAAAEYPGQVGVQIGYHEAFSHRIMGGADVILVPSRFEPCGLTQLYGLKYGTLPLVRRTGGLADTVSDCSLENLADGVASGFVFEDSNAWSLLRAIRRAFVLWSRPSLWRFVQRQAMAMDFSWQVAAKSYRELYYRLK.

Residue K15 coordinates ADP-alpha-D-glucose.

It belongs to the glycosyltransferase 1 family. Bacterial/plant glycogen synthase subfamily.

The enzyme catalyses [(1-&gt;4)-alpha-D-glucosyl](n) + ADP-alpha-D-glucose = [(1-&gt;4)-alpha-D-glucosyl](n+1) + ADP + H(+). It participates in glycan biosynthesis; glycogen biosynthesis. In terms of biological role, synthesizes alpha-1,4-glucan chains using ADP-glucose. This is Glycogen synthase from Escherichia coli O139:H28 (strain E24377A / ETEC).